Reading from the N-terminus, the 223-residue chain is Small ribosomal subunit protein uS3 (223 aa).

A KH type-2 domain is found at 39-107; the sequence is VREFLHKKLA…PVQINIEEVR (69 aa).

It belongs to the universal ribosomal protein uS3 family. In terms of assembly, part of the 30S ribosomal subunit. Forms a tight complex with proteins S10 and S14.

In terms of biological role, binds the lower part of the 30S subunit head. Binds mRNA in the 70S ribosome, positioning it for translation. This chain is Small ribosomal subunit protein uS3, found in Francisella tularensis subsp. holarctica (strain FTNF002-00 / FTA).